The sequence spans 236 residues: MSTGLLAKKVGMTQIFTPEGDCVPVTVLEAGPCTVVRRKTAEKDGYDAVVIGFGVVDEKHAHRLSKPEVGVFKKAGTPIFRHVKEIRVKDAKLLGDLKAGDVLTVDKVFKANQRIDVAGVTKGRGFTGVMKRWNMKGAARDSSTAHEHHRHVGAIGQRKTPGKVWKGKHLPGHYGVDNITIQNLTVVGIEPEQNVLLVSGAVPGHADGLLFVNTAAKGQPRIKQKQEVRERAKPKV.

The protein belongs to the universal ribosomal protein uL3 family. As to quaternary structure, part of the 50S ribosomal subunit. Forms a cluster with proteins L14 and L19.

Its function is as follows. One of the primary rRNA binding proteins, it binds directly near the 3'-end of the 23S rRNA, where it nucleates assembly of the 50S subunit. This Anaeromyxobacter dehalogenans (strain 2CP-C) protein is Large ribosomal subunit protein uL3.